A 181-amino-acid chain; its full sequence is Ubiquitin-conjugating enzyme E2 19 (181 aa).

A compositionally biased stretch (polar residues) spans 1–10 (MATVNGYTGN). Residues 1–33 (MATVNGYTGNTPAATTPAATGSKQSAPPTKTVD) form a disordered region. A compositionally biased stretch (low complexity) spans 11–20 (TPAATTPAAT). The 146-residue stretch at 36–181 (SVLKRLQSEL…VEKLYKPLNA (146 aa)) folds into the UBC core domain. Catalysis depends on Cys-120, which acts as the Glycyl thioester intermediate.

The protein belongs to the ubiquitin-conjugating enzyme family. In terms of assembly, interacts with OR. Binds to LOT1. As to expression, expressed in all tissues with cell division activities and in mature leaves.

The protein resides in the cytoplasm. The protein localises to the nucleus. It carries out the reaction S-ubiquitinyl-[E1 ubiquitin-activating enzyme]-L-cysteine + [E2 ubiquitin-conjugating enzyme]-L-cysteine = [E1 ubiquitin-activating enzyme]-L-cysteine + S-ubiquitinyl-[E2 ubiquitin-conjugating enzyme]-L-cysteine.. It functions in the pathway protein modification; protein ubiquitination. Accepts the ubiquitin from the E1 complex and catalyzes its covalent attachment to other proteins. Part of the anaphase-promoting complex (APC). May have a key function during cell cycle and be involved in cyclin B1 degradation. Triggers OR ubiquitination that mediates its subsequent nuclear localization. Involved in the repression of early light-induced proteins (ELIPs, e.g. ELIP1 and ELIP2) expression, probably via OR nuclear relocalization. The chain is Ubiquitin-conjugating enzyme E2 19 from Arabidopsis thaliana (Mouse-ear cress).